A 335-amino-acid chain; its full sequence is Putative hydrogenase expression/formation protein MJ0676 (335 aa).

Belongs to the HypE family.

The protein is Putative hydrogenase expression/formation protein MJ0676 of Methanocaldococcus jannaschii (strain ATCC 43067 / DSM 2661 / JAL-1 / JCM 10045 / NBRC 100440) (Methanococcus jannaschii).